We begin with the raw amino-acid sequence, 88 residues long: Small ribosomal subunit protein uS17 (88 aa).

This sequence belongs to the universal ribosomal protein uS17 family. As to quaternary structure, part of the 30S ribosomal subunit.

Its function is as follows. One of the primary rRNA binding proteins, it binds specifically to the 5'-end of 16S ribosomal RNA. The protein is Small ribosomal subunit protein uS17 of Pseudomonas savastanoi pv. phaseolicola (strain 1448A / Race 6) (Pseudomonas syringae pv. phaseolicola (strain 1448A / Race 6)).